A 230-amino-acid polypeptide reads, in one-letter code: Biosynthetic peptidoglycan transglycosylase (230 aa).

Residues 10–30 (IFLFFIAVIFVYQFWIFSQIV) traverse the membrane as a helical segment.

The protein belongs to the glycosyltransferase 51 family.

It localises to the cell inner membrane. The enzyme catalyses [GlcNAc-(1-&gt;4)-Mur2Ac(oyl-L-Ala-gamma-D-Glu-L-Lys-D-Ala-D-Ala)](n)-di-trans,octa-cis-undecaprenyl diphosphate + beta-D-GlcNAc-(1-&gt;4)-Mur2Ac(oyl-L-Ala-gamma-D-Glu-L-Lys-D-Ala-D-Ala)-di-trans,octa-cis-undecaprenyl diphosphate = [GlcNAc-(1-&gt;4)-Mur2Ac(oyl-L-Ala-gamma-D-Glu-L-Lys-D-Ala-D-Ala)](n+1)-di-trans,octa-cis-undecaprenyl diphosphate + di-trans,octa-cis-undecaprenyl diphosphate + H(+). Its pathway is cell wall biogenesis; peptidoglycan biosynthesis. In terms of biological role, peptidoglycan polymerase that catalyzes glycan chain elongation from lipid-linked precursors. The polypeptide is Biosynthetic peptidoglycan transglycosylase (Nitrosospira multiformis (strain ATCC 25196 / NCIMB 11849 / C 71)).